The chain runs to 104 residues: Large ribosomal subunit protein uL24 (104 aa).

This sequence belongs to the universal ribosomal protein uL24 family. In terms of assembly, part of the 50S ribosomal subunit.

Functionally, one of two assembly initiator proteins, it binds directly to the 5'-end of the 23S rRNA, where it nucleates assembly of the 50S subunit. Its function is as follows. One of the proteins that surrounds the polypeptide exit tunnel on the outside of the subunit. The chain is Large ribosomal subunit protein uL24 from Serratia proteamaculans (strain 568).